The following is a 338-amino-acid chain: Fructose-1,6-bisphosphatase 1 (338 aa).

An N-acetylalanine modification is found at Ala-2. AMP-binding positions include 18-22 and 28-32; these read VMEQG and TGELT. Mg(2+)-binding residues include Asp-69 and Glu-98. 113-114 contacts AMP; it reads KY. Residues Asp-119, Leu-121, and Asp-122 each coordinate Mg(2+). 122–125 is a binding site for substrate; sequence DGSS. Arg-141 provides a ligand contact to AMP. An N6-succinyllysine modification is found at Lys-151. Substrate contacts are provided by residues 213 to 216, 244 to 249, Tyr-265, and 275 to 277; these read NEGY, RYVGSM, and KLR. Residues Tyr-216, Tyr-245, and Tyr-265 each carry the phosphotyrosine modification. Mg(2+) is bound at residue Glu-281.

It belongs to the FBPase class 1 family. In terms of assembly, homotetramer. The cofactor is Mg(2+). As to expression, detected in pancreatic beta-cell lines MIN6 and beta-TC and in liver (at protein level). Preferentially expressed in liver, with lower levels detected in pancreatic islets and intestine, and very low levels in blood, muscle, brain and spleen.

The enzyme catalyses beta-D-fructose 1,6-bisphosphate + H2O = beta-D-fructose 6-phosphate + phosphate. It participates in carbohydrate biosynthesis; gluconeogenesis. Subject to complex allosteric regulation. The enzyme can assume an active R-state, or an inactive T-state. Intermediate conformations may exist. AMP acts as an allosteric inhibitor. AMP binding affects the turnover of bound substrate and not the affinity for substrate. Fructose 2,6-bisphosphate acts as a competitive inhibitor. Fructose 2,6-bisphosphate and AMP have synergistic effects. Its function is as follows. Catalyzes the hydrolysis of fructose 1,6-bisphosphate to fructose 6-phosphate in the presence of divalent cations, acting as a rate-limiting enzyme in gluconeogenesis. Plays a role in regulating glucose sensing and insulin secretion of pancreatic beta-cells. Appears to modulate glycerol gluconeogenesis in liver. Important regulator of appetite and adiposity; increased expression of the protein in liver after nutrient excess increases circulating satiety hormones and reduces appetite-stimulating neuropeptides and thus seems to provide a feedback mechanism to limit weight gain. The chain is Fructose-1,6-bisphosphatase 1 (Fbp1) from Mus musculus (Mouse).